The following is a 333-amino-acid chain: MGPVVPVEAFRSAGKISALGAKKGYVTFLAGNGDYVKGVVGLAKGLRKVKSAYPLVVAILPDVPEEHRELLRSQGCIVKEIEPIYPPANQIQFAMAYYVINYSKLRIWNFEEYSKMVYLDADIQVYENIDHLLDTPDGYFYAVMDCFCEKTWSHSRQFSIGYCQQCPNKVTWPAQMGSPPPLYFNAGMFVFEPSKTTYQTLLHTLRITPPTPFAEQDFLNMFFEPIYKPIPLVYNLVLAMLWRHPENVELEKVQVVHYCAAGSKPWRYTGQEANMDREDIKMLVKKWWDVYNDESLDFKAEDSIAGEETFSMPSFIASLPEPAVSYIPAPSAA.

The active site involves Lys-104. 3 residues coordinate Mn(2+): Asp-120, Asp-122, and His-257.

It belongs to the glycosyltransferase 8 family. Galactosyltransferase subfamily. A divalent metal cation is required as a cofactor. Expressed in source leaves, specifically in the mesophyll.

It is found in the cytoplasm. It carries out the reaction myo-inositol + UDP-alpha-D-galactose = alpha-D-galactosyl-(1-&gt;3)-1D-myo-inositol + UDP + H(+). In terms of biological role, major galactinol synthase mainly involved in the biosynthesis of storage raffinose family oligosaccharides (RFOs) that function as osmoprotectants. May promote plant stress tolerance. The sequence is that of Galactinol synthase 1 (GOLS1) from Ajuga reptans (Bugle).